The chain runs to 89 residues: MALEAAVKQEIIKEYATGEADTGSPEVQIAMLSKRILDLTEHLKVHKHDHHTRRGLMALVGRRKRLLTYLKDTDITRYRALIERLGLRR.

The protein belongs to the universal ribosomal protein uS15 family. Part of the 30S ribosomal subunit. Forms a bridge to the 50S subunit in the 70S ribosome, contacting the 23S rRNA.

In terms of biological role, one of the primary rRNA binding proteins, it binds directly to 16S rRNA where it helps nucleate assembly of the platform of the 30S subunit by binding and bridging several RNA helices of the 16S rRNA. Its function is as follows. Forms an intersubunit bridge (bridge B4) with the 23S rRNA of the 50S subunit in the ribosome. The protein is Small ribosomal subunit protein uS15 of Renibacterium salmoninarum (strain ATCC 33209 / DSM 20767 / JCM 11484 / NBRC 15589 / NCIMB 2235).